A 200-amino-acid chain; its full sequence is NAD(P)H dehydrogenase (quinone) (200 aa).

The Flavodoxin-like domain maps to Val4–Val191. Residues Ser10 to Val15 and Thr79 to Phe81 each bind FMN. Tyr12 is a binding site for NAD(+). Residue Trp99 participates in substrate binding. Residues Ser114–Gly120 and His135 each bind FMN.

This sequence belongs to the WrbA family. The cofactor is FMN.

The catalysed reaction is a quinone + NADH + H(+) = a quinol + NAD(+). It carries out the reaction a quinone + NADPH + H(+) = a quinol + NADP(+). The sequence is that of NAD(P)H dehydrogenase (quinone) from Burkholderia orbicola (strain MC0-3).